A 271-amino-acid polypeptide reads, in one-letter code: Putative pyruvate, phosphate dikinase regulatory protein (271 aa).

Position 147-154 (147-154 (GLSRTSKT)) interacts with ADP.

The protein belongs to the pyruvate, phosphate/water dikinase regulatory protein family. PDRP subfamily.

The catalysed reaction is N(tele)-phospho-L-histidyl/L-threonyl-[pyruvate, phosphate dikinase] + ADP = N(tele)-phospho-L-histidyl/O-phospho-L-threonyl-[pyruvate, phosphate dikinase] + AMP + H(+). It catalyses the reaction N(tele)-phospho-L-histidyl/O-phospho-L-threonyl-[pyruvate, phosphate dikinase] + phosphate + H(+) = N(tele)-phospho-L-histidyl/L-threonyl-[pyruvate, phosphate dikinase] + diphosphate. Functionally, bifunctional serine/threonine kinase and phosphorylase involved in the regulation of the pyruvate, phosphate dikinase (PPDK) by catalyzing its phosphorylation/dephosphorylation. The chain is Putative pyruvate, phosphate dikinase regulatory protein from Clostridium tetani (strain Massachusetts / E88).